The chain runs to 1025 residues: Adenylate-forming reductase 03009 (1025 aa).

The interval 38–422 (FEFHAKSNPQ…LGRIDNQVKI (385 aa)) is adenylation (A) domain. Residues 332-333 (VT) and 412-415 (HLGR) each bind AMP. Positions 556–638 (SLGSTNTKIS…AILIWICVKK (83 aa)) are thiolation and peptide carrier (T) domain. The interval 682-900 (FIRRTAARVY…PPTKLWVKGV (219 aa)) is thioester reductase (TR) domain. NADP(+) is bound by residues 685-688 (RTAA), 769-771 (SAL), and Y840.

It belongs to the adenylate-forming reductase family.

Functionally, adenylate-forming reductase, a natural product biosynthesis enzyme that resembles non-ribosomal peptide synthetases, yet serves to modify one substrate, rather than to condense two or more building blocks. The A-domain preferentially accepts L-serine, L-alanine and L-valine as substrates. The natural product of the enzyme is not yet known. The polypeptide is Adenylate-forming reductase 03009 (Coprinopsis cinerea (strain Okayama-7 / 130 / ATCC MYA-4618 / FGSC 9003) (Inky cap fungus)).